Here is an 86-residue protein sequence, read N- to C-terminus: UPF0457 protein SSP0714 (86 aa).

It belongs to the UPF0457 family.

In Staphylococcus saprophyticus subsp. saprophyticus (strain ATCC 15305 / DSM 20229 / NCIMB 8711 / NCTC 7292 / S-41), this protein is UPF0457 protein SSP0714.